The primary structure comprises 312 residues: Putative electron transfer flavoprotein subunit YdiR (312 aa).

Position 254 to 282 (254 to 282) interacts with FAD; sequence LYLTLGISGQIQHMVGGNGAKVIVAINKD.

This sequence belongs to the ETF alpha-subunit/FixB family. As to quaternary structure, ydiR and YdiQ form a heterodimer.

Its function is as follows. May play a role in a redox process. The sequence is that of Putative electron transfer flavoprotein subunit YdiR (ydiR) from Escherichia coli (strain K12).